The sequence spans 596 residues: Histone deacetylase 9 (596 aa).

Composition is skewed to basic and acidic residues over residues 132–153 (REKE…HRQE) and 160–172 (RSKD…AVAS). Disordered stretches follow at residues 132–172 (REKE…AVAS), 214–258 (HTSL…VRSR), 293–313 (SSVS…GPVA), and 522–596 (QPEG…QQVT). The interval 172-222 (STEVKQKLQEFILSKSATKEPLTNGTSHSMGRHPKLWYTAAHHTSLDQSSP) is interaction with mef2. A compositionally biased stretch (pro residues) spans 221-237 (SPPPSGTSPTYKCPPPG). A compositionally biased stretch (low complexity) spans 293–312 (SSVSSSSPVSGPSSPNNGPV). The span at 522–536 (QPEGHLEEAEEDLHG) shows a compositional bias: basic and acidic residues. Over residues 541 to 558 (QEKSSSIDNTRSYSSTDL) the composition is skewed to polar residues. Basic and acidic residues predominate over residues 567 to 585 (KVKEEPPDSENEIKTHLQS). Over residues 586-596 (EQKSVFAQQVT) the composition is skewed to polar residues.

Belongs to the histone deacetylase family. HD type 2 subfamily. As to quaternary structure, homodimer. Interacts with mef2. In terms of tissue distribution, broadly expressed.

The protein localises to the nucleus. It carries out the reaction N(6)-acetyl-L-lysyl-[histone] + H2O = L-lysyl-[histone] + acetate. Its function is as follows. Devoided of intrinsic deacetylase activity, promotes the deacetylation of lysine residues on the N-terminal part of the core histones (H2A, H2B, H3 and H4) by recruiting other histone deacetylases. Histone deacetylation gives a tag for epigenetic repression and plays an important role in transcriptional regulation, cell cycle progression and developmental events. Represses MEF2-dependent transcription. In Xenopus laevis (African clawed frog), this protein is Histone deacetylase 9 (hdac9).